We begin with the raw amino-acid sequence, 542 residues long: MAAKDVKFHSDARERMLRGVDVLANAVKVTLGPKGRNVVIDKSFGAPRITKDGVTVAKEIELEDKFENMGAQMVREVASKTNDAAGDGTTTATVLTQAIVKEGAKAVASGMNPMDLKRGIDKAVEAIVEELKKNARKVTKNDEIAQVGTISANGDQEIGRFLAQAMEKVGNEGVITVEEAKTAETELEVVEGMQFDRGYLSPYFITNQEKMRVELDEPYLLIHEKKLASLQPLLPVLEAVVQSGKPLLIIAEDVEGEALATLVVNKLRGGLKVAAVKAPGFGDRRKAMLQDIAILTGGTAISEDLGIKLENVTLEMLGRAKKVVIEKENTTIVDGAGSKDEIQGRVNQIKAQIEETTSDYDREKLQERLAKLAGGVAVIRVGGATEVEVKERKDRVDDAMHATRAAVEEGLLPGGGVALLRAAKALDNVTGENEDQKVGISIVRRAIEAPIRQIAENAGAEGSIIVGRVREKPDFGYGWNAQTGEYGDLYQMGVIDPVKVVRAALQDAASVAGLLITTEAMVADRPKKETAPAMPAGAGMDF.

ATP contacts are provided by residues 30–33 (TLGP), lysine 51, 87–91 (DGTTT), glycine 415, and aspartate 496.

This sequence belongs to the chaperonin (HSP60) family. Forms a cylinder of 14 subunits composed of two heptameric rings stacked back-to-back. Interacts with the co-chaperonin GroES.

The protein resides in the cytoplasm. It carries out the reaction ATP + H2O + a folded polypeptide = ADP + phosphate + an unfolded polypeptide.. Its function is as follows. Together with its co-chaperonin GroES, plays an essential role in assisting protein folding. The GroEL-GroES system forms a nano-cage that allows encapsulation of the non-native substrate proteins and provides a physical environment optimized to promote and accelerate protein folding. This Chelativorans sp. (strain BNC1) protein is Chaperonin GroEL 2.